Consider the following 174-residue polypeptide: Co-chaperone protein HscB homolog (174 aa).

The 73-residue stretch at 2 to 74 folds into the J domain; it reads NYFELFNLPV…IRRAEHMLAL (73 aa).

Belongs to the HscB family. In terms of assembly, interacts with HscA and stimulates its ATPase activity.

Functionally, co-chaperone involved in the maturation of iron-sulfur cluster-containing proteins. Seems to help targeting proteins to be folded toward HscA. This chain is Co-chaperone protein HscB homolog, found in Shewanella amazonensis (strain ATCC BAA-1098 / SB2B).